The following is a 114-amino-acid chain: MNITLTKRQQEFLLLNGWLQLQCGHAERACILLDALLMLNPEHLAGRRCRLVALLNNNQGERAEKEAQWLISHDPLQAGNWLCLSRAQQLNGDLDKARHAYQHYLELKDHNESL.

As to quaternary structure, binds to YscX.

Its subcellular location is the cytoplasm. In terms of biological role, required for Yop secretion. Functions probably as a chaperone which stabilizes YscX within the cell, before its secretion. The sequence is that of Chaperone protein YscY (yscY) from Yersinia enterocolitica serotype O:8 / biotype 1B (strain NCTC 13174 / 8081).